A 364-amino-acid chain; its full sequence is Chorismate synthase (364 aa).

Residues methionine 41–arginine 60 are disordered. The NADP(+) site is built by arginine 48 and arginine 54. Residues arginine 125 to serine 127, asparagine 238 to alanine 239, glycine 278, lysine 293 to serine 297, and arginine 319 each bind FMN.

The protein belongs to the chorismate synthase family. In terms of assembly, homotetramer. The cofactor is FMNH2.

It catalyses the reaction 5-O-(1-carboxyvinyl)-3-phosphoshikimate = chorismate + phosphate. It participates in metabolic intermediate biosynthesis; chorismate biosynthesis; chorismate from D-erythrose 4-phosphate and phosphoenolpyruvate: step 7/7. Its function is as follows. Catalyzes the anti-1,4-elimination of the C-3 phosphate and the C-6 proR hydrogen from 5-enolpyruvylshikimate-3-phosphate (EPSP) to yield chorismate, which is the branch point compound that serves as the starting substrate for the three terminal pathways of aromatic amino acid biosynthesis. This reaction introduces a second double bond into the aromatic ring system. This chain is Chorismate synthase, found in Shewanella baltica (strain OS223).